The sequence spans 629 residues: tRNA uridine 5-carboxymethylaminomethyl modification enzyme MnmG (629 aa).

Residues 13 to 18, Val-125, and Ser-180 contribute to the FAD site; that span reads GGGHAG. Position 273–287 (273–287) interacts with NAD(+); that stretch reads GPRYCPSIEDKVMRF. Gln-370 is an FAD binding site.

Belongs to the MnmG family. As to quaternary structure, homodimer. Heterotetramer of two MnmE and two MnmG subunits. It depends on FAD as a cofactor.

The protein localises to the cytoplasm. Its function is as follows. NAD-binding protein involved in the addition of a carboxymethylaminomethyl (cmnm) group at the wobble position (U34) of certain tRNAs, forming tRNA-cmnm(5)s(2)U34. The polypeptide is tRNA uridine 5-carboxymethylaminomethyl modification enzyme MnmG (Salmonella arizonae (strain ATCC BAA-731 / CDC346-86 / RSK2980)).